The sequence spans 72 residues: Large ribosomal subunit protein uL29 (72 aa).

It belongs to the universal ribosomal protein uL29 family.

This chain is Large ribosomal subunit protein uL29, found in Thermus thermophilus (strain ATCC BAA-163 / DSM 7039 / HB27).